Here is a 181-residue protein sequence, read N- to C-terminus: Peptide deformylase 1 (181 aa).

The Fe cation site is built by Cys-106 and His-148. Glu-149 is an active-site residue. A Fe cation-binding site is contributed by His-152.

This sequence belongs to the polypeptide deformylase family. Fe(2+) is required as a cofactor.

It carries out the reaction N-terminal N-formyl-L-methionyl-[peptide] + H2O = N-terminal L-methionyl-[peptide] + formate. In terms of biological role, removes the formyl group from the N-terminal Met of newly synthesized proteins. Requires at least a dipeptide for an efficient rate of reaction. N-terminal L-methionine is a prerequisite for activity but the enzyme has broad specificity at other positions. This Burkholderia multivorans (strain ATCC 17616 / 249) protein is Peptide deformylase 1.